Consider the following 497-residue polypeptide: Thiamine transporter 1 (497 aa).

M1 carries the N-acetylmethionine modification. Over 1–28 the chain is Cytoplasmic; it reads MDVPGPVSRRAAAAAATVLLRTARVRRE. A helical membrane pass occupies residues 29–46; it reads CWFLPTALLCAYGFFASL. Over 47 to 72 the chain is Extracellular; that stretch reads RPSEPFLTPYLLGPDKNLTEREVFNE. The N-linked (GlcNAc...) asparagine glycan is linked to N63. Residues 73-91 form a helical membrane-spanning segment; that stretch reads IYPVWTYSYLVLLFPVFLA. The Cytoplasmic segment spans residues 92–99; sequence TDYLRYKP. A helical transmembrane segment spans residues 100 to 118; the sequence is VVLLQGLSLIVTWFMLLYA. Residues 119–128 lie on the Extracellular side of the membrane; the sequence is QGLLAIQFLE. A helical membrane pass occupies residues 129–149; sequence FFYGIATATEIAYYSYIYSVV. Residues 150–165 are Cytoplasmic-facing; that stretch reads DLGMYQKVTSYCRSAT. Residues 166–185 form a helical membrane-spanning segment; sequence LVGFTVGSVLGQILVSVAGW. At 186-191 the chain is on the extracellular side; it reads SLFSLN. The helical transmembrane segment at 192 to 208 threads the bilayer; the sequence is VISLTCVSVAFAVAWFL. Residues 209–285 are Cytoplasmic-facing; the sequence is PMPQKSLFFH…LLVLKVLWND (77 aa). Position 222 is a phosphoserine (S222). A helical transmembrane segment spans residues 286 to 310; that stretch reads FLMCYSSRPLLCWSVWWALSTCGYF. Residues 311-337 lie on the Extracellular side of the membrane; sequence QVVNYTQGLWEKVMPSRYAAIYNGGVE. A glycan (N-linked (GlcNAc...) asparagine) is linked at N314. The helical transmembrane segment at 338 to 354 threads the bilayer; the sequence is AVSTLLGAVAVFAVGYI. Residues 355–363 lie on the Cytoplasmic side of the membrane; that stretch reads KISWSTWGE. Residues 364 to 380 traverse the membrane as a helical segment; sequence MTLSLFSLLIAAAVYIM. Residues 381–386 lie on the Extracellular side of the membrane; sequence DTVGNI. Residues 387-409 form a helical membrane-spanning segment; it reads WVCYASYVVFRIIYMLLITIATF. The Cytoplasmic portion of the chain corresponds to 410–419; the sequence is QIAANLSMER. The chain crosses the membrane as a helical span at residues 420–443; the sequence is YALVFGVNTFIALALQTLLTLIVV. The Extracellular portion of the chain corresponds to 444 to 455; sequence DASGLGLEITTQ. The chain crosses the membrane as a helical span at residues 456–479; the sequence is FLIYASYFALIAVVFLASGAVSVM. Over 480–497 the chain is Cytoplasmic; that stretch reads KKCRKLEDPQSSSQVTTS.

The protein belongs to the reduced folate carrier (RFC) transporter (TC 2.A.48) family. As to quaternary structure, interacts with TSPAN1; this interaction increases the stability of SLC19A2. Interacts with TMEM63B. As to expression, ubiquitous; most abundant in skeletal and cardiac muscle. Medium expression in placenta, heart, liver and kidney, low in lung.

Its subcellular location is the cell membrane. It catalyses the reaction thiamine(out) + H(+)(in) = thiamine(in) + H(+)(out). The catalysed reaction is pyridoxine(out) + n H(+)(out) = pyridoxine(in) + n H(+)(in). Pyridoxine transport is inhibited by carbonyl cyanide p-trifluoromethoxyphenylhydrazone (FCCP) and carbonyl cyanide m-chlorophenylhydrazone (CCCP). In terms of biological role, high-affinity transporter for the intake of thiamine. Mediates H(+)-dependent pyridoxine transport. The protein is Thiamine transporter 1 (SLC19A2) of Homo sapiens (Human).